A 120-amino-acid chain; its full sequence is Prefoldin subunit beta (120 aa).

It belongs to the prefoldin subunit beta family. In terms of assembly, heterohexamer of two alpha and four beta subunits.

It localises to the cytoplasm. Functionally, molecular chaperone capable of stabilizing a range of proteins. Seems to fulfill an ATP-independent, HSP70-like function in archaeal de novo protein folding. The polypeptide is Prefoldin subunit beta (Methanospirillum hungatei JF-1 (strain ATCC 27890 / DSM 864 / NBRC 100397 / JF-1)).